Reading from the N-terminus, the 313-residue chain is Leucine zipper protein 4 (313 aa).

Positions 1 to 119 (MASFRKLTLS…PLIEQEKCSD (119 aa)) are interaction with DDX39B/UAP56. 2 disordered regions span residues 1–238 (MASF…QGDL) and 290–313 (QSGRSHGQSERHQRYSTGKNTITT). The short motif at 22-40 (KVNFLDMSLDDIIIYKELE) is the UAP56-binding motif (UBM); required for proper nuclear localization element. Basic and acidic residues predominate over residues 34–60 (IIYKELEGTNAEEEKNKRQNHSKKESP). The interval 51–80 (RQNHSKKESPSRQQSKAHRHRHRRGYSRCR) is arg-rich; required for RNA-binding. Residues 65 to 77 (SKAHRHRHRRGYS) show a composition bias toward basic residues. Positions 81–92 (SNSEEGNHDKKP) are enriched in basic and acidic residues. Residues 126-141 (EKNQGQSEGNQHQSEG) show a composition bias toward polar residues. A compositionally biased stretch (basic and acidic residues) spans 142 to 168 (NPDKSEESQGQPEENHHSERSRNHLER). Positions 169-179 (SLSQSDRSQGQ) are enriched in polar residues. An RS-containing His-rich (RS-H); necessary for nuclear localization region spans residues 178-236 (GQLKRHHPQYERSHGQYKRSHGQSERSHGHSERSHGHSERSHGHSERSHGHSKRSRSQG). Residues 199-226 (GQSERSHGHSERSHGHSERSHGHSERSH) are compositionally biased toward basic and acidic residues. A Phosphoserine modification is found at Ser-234. Residues 238-287 (LVDTQSDLIATQRDLIATQKDLIATQRDLIATQRDLIVTQRDLVATERDL) form a leucine-zipper; required for RNA-binding and for its relocalization to the cytoplasm during cell division region. An interaction with NXF1 region spans residues 241-313 (TQSDLIATQR…YSTGKNTITT (73 aa)). A compositionally biased stretch (polar residues) spans 304-313 (YSTGKNTITT).

As to quaternary structure, interacts with NXF1, NXF2, THOC1, THOC5, DDX39B/UAP56 and SRRT. As to expression, expressed specifically in testis. Also expressed in a wide variety of cancer types, but particularly high levels of expression observed in melanoma cells.

It is found in the nucleus. It localises to the cytoplasm. In terms of biological role, export adapter involved in mRNA nuclear export in cancer cells. Binds and enhances the RNA-binding activity of the nuclear RNA export factor NXF1. Can restore mRNA export function in cells compromised by loss of mRNA export adapters. The chain is Leucine zipper protein 4 (LUZP4) from Homo sapiens (Human).